We begin with the raw amino-acid sequence, 477 residues long: Cysteine--tRNA ligase (477 aa).

Cys42 contributes to the Zn(2+) binding site. Positions 44-54 (ATVQGLPHIGH) match the 'HIGH' region motif. Residues Cys220, His245, and Glu249 each contribute to the Zn(2+) site. The 'KMSKS' region motif lies at 276–280 (KMSKS). Position 279 (Lys279) interacts with ATP.

Belongs to the class-I aminoacyl-tRNA synthetase family. In terms of assembly, monomer. The cofactor is Zn(2+).

The protein localises to the cytoplasm. It carries out the reaction tRNA(Cys) + L-cysteine + ATP = L-cysteinyl-tRNA(Cys) + AMP + diphosphate. The protein is Cysteine--tRNA ligase of Mycolicibacterium smegmatis (strain ATCC 700084 / mc(2)155) (Mycobacterium smegmatis).